Consider the following 496-residue polypeptide: Apulose kinase (496 aa).

Residues 13 to 15 (TTN), Thr267, Gly308, and 408 to 412 (GATQN) each bind ATP.

It belongs to the FGGY kinase family.

It catalyses the reaction apulose + ATP = apulose 4-phosphate + ADP + H(+). The protein operates within carbohydrate metabolism. In terms of biological role, involved in catabolism of D-apiose. Catalyzes phosphorylation of apulose to form apulose 4-phosphate. In Pectobacterium atrosepticum (strain SCRI 1043 / ATCC BAA-672) (Erwinia carotovora subsp. atroseptica), this protein is Apulose kinase.